Consider the following 279-residue polypeptide: Phosphate import ATP-binding protein PstB 2 (279 aa).

The ABC transporter domain occupies 34 to 274 (FDIENLDLYY…PSDDRTRGYV (241 aa)). ATP is bound at residue 66 to 73 (GPSGCGKS).

The protein belongs to the ABC transporter superfamily. Phosphate importer (TC 3.A.1.7) family. The complex is composed of two ATP-binding proteins (PstB), two transmembrane proteins (PstC and PstA) and a solute-binding protein (PstS).

Its subcellular location is the cell inner membrane. The catalysed reaction is phosphate(out) + ATP + H2O = ADP + 2 phosphate(in) + H(+). In terms of biological role, part of the ABC transporter complex PstSACB involved in phosphate import. Responsible for energy coupling to the transport system. The sequence is that of Phosphate import ATP-binding protein PstB 2 from Vibrio vulnificus (strain YJ016).